The sequence spans 248 residues: NSYFEQASGFYGHPHQATGMSMGTAGHHDQSATAAAAAYRGFPLSLGMTPYTNHHLQRSTQDSPYDASITAACNKIYGDGNAYKQDCLNIKSDTINGYKDIWNTTANGGGAGGGGGTGGGGGGSAGSANGANNTANGQNTSGGGGAGGGGGMPVRPSACTPDSRVGGYLDTSGGSPVSHRGGSAGVVGGAGTGVGQSGQSANVGGAGGVGGATAWNANCTISGAAAAQTASSLHQASNHTFYPWMAIA.

Over residues 116–125 (GTGGGGGGSA) the composition is skewed to gly residues. A disordered region spans residues 116–191 (GTGGGGGGSA…GSAGVVGGAG (76 aa)). Residues 126–139 (GSANGANNTANGQN) show a composition bias toward low complexity. Composition is skewed to gly residues over residues 140–152 (TSGGGGAGGGGGM) and 182–191 (GSAGVVGGAG). The Antp-type hexapeptide motif lies at 241–246 (FYPWMA).

It belongs to the Antp homeobox family.

It is found in the nucleus. Functionally, sequence-specific transcription factor which is part of a developmental regulatory system that provides cells with specific positional identities on the anterior-posterior axis. Binds the consensus region 5'-TTAAT[GT][GA]-3'. This is Homeotic protein ultrabithorax (Ubx) from Musca domestica (House fly).